The sequence spans 395 residues: 1-deoxy-D-xylulose 5-phosphate reductoisomerase (395 aa).

NADPH contacts are provided by T10, G11, S12, I13, K37, and N123. K124 provides a ligand contact to 1-deoxy-D-xylulose 5-phosphate. E125 contacts NADPH. Residue D149 participates in Mn(2+) binding. Residues S150, E151, S185, and H208 each coordinate 1-deoxy-D-xylulose 5-phosphate. A Mn(2+)-binding site is contributed by E151. G214 is a binding site for NADPH. Residues S221, N226, K227, and E230 each contribute to the 1-deoxy-D-xylulose 5-phosphate site. E230 is a Mn(2+) binding site.

It belongs to the DXR family. It depends on Mg(2+) as a cofactor. Requires Mn(2+) as cofactor.

It catalyses the reaction 2-C-methyl-D-erythritol 4-phosphate + NADP(+) = 1-deoxy-D-xylulose 5-phosphate + NADPH + H(+). It participates in isoprenoid biosynthesis; isopentenyl diphosphate biosynthesis via DXP pathway; isopentenyl diphosphate from 1-deoxy-D-xylulose 5-phosphate: step 1/6. In terms of biological role, catalyzes the NADPH-dependent rearrangement and reduction of 1-deoxy-D-xylulose-5-phosphate (DXP) to 2-C-methyl-D-erythritol 4-phosphate (MEP). In Shewanella loihica (strain ATCC BAA-1088 / PV-4), this protein is 1-deoxy-D-xylulose 5-phosphate reductoisomerase.